Consider the following 213-residue polypeptide: Orotate phosphoribosyltransferase (213 aa).

Position 26 (K26) interacts with 5-phospho-alpha-D-ribose 1-diphosphate. 34 to 35 is an orotate binding site; sequence FF. 5-phospho-alpha-D-ribose 1-diphosphate is bound by residues 72–73, R99, K100, K103, H105, and 124–132; these read YK and DDVITAGTA. Residues T128 and R156 each contribute to the orotate site.

It belongs to the purine/pyrimidine phosphoribosyltransferase family. PyrE subfamily. As to quaternary structure, homodimer. Requires Mg(2+) as cofactor.

It catalyses the reaction orotidine 5'-phosphate + diphosphate = orotate + 5-phospho-alpha-D-ribose 1-diphosphate. It participates in pyrimidine metabolism; UMP biosynthesis via de novo pathway; UMP from orotate: step 1/2. Functionally, catalyzes the transfer of a ribosyl phosphate group from 5-phosphoribose 1-diphosphate to orotate, leading to the formation of orotidine monophosphate (OMP). The polypeptide is Orotate phosphoribosyltransferase (Escherichia coli O45:K1 (strain S88 / ExPEC)).